A 427-amino-acid chain; its full sequence is Peptidase B (427 aa).

The Mn(2+) site is built by Lys195 and Asp200. Lys207 is a catalytic residue. Mn(2+) is bound by residues Asp218, Asp277, and Glu279. Residue Arg281 is part of the active site.

Belongs to the peptidase M17 family. As to quaternary structure, homohexamer. It depends on Mn(2+) as a cofactor.

Its subcellular location is the cytoplasm. It carries out the reaction Release of an N-terminal amino acid, Xaa, from a peptide or arylamide. Xaa is preferably Glu or Asp but may be other amino acids, including Leu, Met, His, Cys and Gln.. Probably plays an important role in intracellular peptide degradation. The chain is Peptidase B from Salmonella dublin (strain CT_02021853).